Reading from the N-terminus, the 339-residue chain is Tetraacyldisaccharide 4'-kinase (339 aa).

53–60 is an ATP binding site; sequence TCGGAGKT.

Belongs to the LpxK family.

The enzyme catalyses a lipid A disaccharide + ATP = a lipid IVA + ADP + H(+). It participates in glycolipid biosynthesis; lipid IV(A) biosynthesis; lipid IV(A) from (3R)-3-hydroxytetradecanoyl-[acyl-carrier-protein] and UDP-N-acetyl-alpha-D-glucosamine: step 6/6. In terms of biological role, transfers the gamma-phosphate of ATP to the 4'-position of a tetraacyldisaccharide 1-phosphate intermediate (termed DS-1-P) to form tetraacyldisaccharide 1,4'-bis-phosphate (lipid IVA). The sequence is that of Tetraacyldisaccharide 4'-kinase from Bartonella henselae (strain ATCC 49882 / DSM 28221 / CCUG 30454 / Houston 1) (Rochalimaea henselae).